The sequence spans 315 residues: ATP synthase gamma chain (315 aa).

In terms of assembly, F-type ATPases have 2 components, CF(1) - the catalytic core - and CF(0) - the membrane proton channel. CF(1) has five subunits: alpha(3), beta(3), gamma(1), delta(1), epsilon(1). CF(0) has four main subunits: a(1), b(1), b'(1) and c(9-12).

The protein resides in the cellular thylakoid membrane. Its function is as follows. Produces ATP from ADP in the presence of a proton gradient across the membrane. The gamma chain is believed to be important in regulating ATPase activity and the flow of protons through the CF(0) complex. Functionally, the complex from the organism is particularly stable to disruption and remains functional after 6 hrs at 55 degrees Celsius. This is ATP synthase gamma chain from Thermosynechococcus vestitus (strain NIES-2133 / IAM M-273 / BP-1).